We begin with the raw amino-acid sequence, 480 residues long: Glutamate--tRNA ligase (480 aa).

The short motif at 21 to 31 (PSPTGYLHVGG) is the 'HIGH' region element. A compositionally biased stretch (basic and acidic residues) spans 122-146 (NTQEQNKQKPRYDRHCLGDHKHSPE). The tract at residues 122-149 (NTQEQNKQKPRYDRHCLGDHKHSPEQPH) is disordered. Positions 248-252 (KLSKR) match the 'KMSKS' region motif. K251 is an ATP binding site.

It belongs to the class-I aminoacyl-tRNA synthetase family. Glutamate--tRNA ligase type 1 subfamily. In terms of assembly, monomer.

It is found in the cytoplasm. It catalyses the reaction tRNA(Glu) + L-glutamate + ATP = L-glutamyl-tRNA(Glu) + AMP + diphosphate. Catalyzes the attachment of glutamate to tRNA(Glu) in a two-step reaction: glutamate is first activated by ATP to form Glu-AMP and then transferred to the acceptor end of tRNA(Glu). This Pasteurella multocida (strain Pm70) protein is Glutamate--tRNA ligase.